Here is a 202-residue protein sequence, read N- to C-terminus: Ras-related protein Rab-18 (202 aa).

Ser20, Gly23, Lys24, Ser25, Ser26, Asp37, Pro38, Thr43, Gly69, Lys126, Asp128, and Ala155 together coordinate GTP. The Effector region signature appears at 40-48; sequence QAATIGVDF. A disordered region spans residues 183–202; it reads RPTFRLGQPTDTSSGNLCGC. Residues 191 to 202 show a composition bias toward polar residues; that stretch reads PTDTSSGNLCGC. S-geranylgeranyl cysteine attachment occurs at residues Cys200 and Cys202. Cys202 carries the post-translational modification Cysteine methyl ester.

This sequence belongs to the small GTPase superfamily. Rab family.

It carries out the reaction GTP + H2O = GDP + phosphate + H(+). The small GTPases Rab are key regulators of intracellular membrane trafficking, from the formation of transport vesicles to their fusion with membranes. Rabs cycle between an inactive GDP-bound form and an active GTP-bound form that is able to recruit to membranes different sets of downstream effectors directly responsible for vesicle formation, movement, tethering and fusion. Plays a role in apical endocytosis/recycling. May be implicated in transport between the plasma membrane and early endosomes. The chain is Ras-related protein Rab-18 (rab-18) from Caenorhabditis briggsae.